Here is a 264-residue protein sequence, read N- to C-terminus: Glucosamine-6-phosphate deaminase (264 aa).

Residue aspartate 72 is the Proton acceptor; for enolization step of the active site. Residue aspartate 141 is the For ring-opening step of the active site. The Proton acceptor; for ring-opening step role is filled by histidine 143. Catalysis depends on glutamate 148, which acts as the For ring-opening step.

It belongs to the glucosamine/galactosamine-6-phosphate isomerase family. NagB subfamily. In terms of assembly, homohexamer.

The catalysed reaction is alpha-D-glucosamine 6-phosphate + H2O = beta-D-fructose 6-phosphate + NH4(+). It participates in amino-sugar metabolism; N-acetylneuraminate degradation; D-fructose 6-phosphate from N-acetylneuraminate: step 5/5. Its activity is regulated as follows. Allosterically activated by N-acetylglucosamine 6-phosphate (GlcNAc6P). Functionally, catalyzes the reversible isomerization-deamination of glucosamine 6-phosphate (GlcN6P) to form fructose 6-phosphate (Fru6P) and ammonium ion. The protein is Glucosamine-6-phosphate deaminase of Glaesserella parasuis serovar 5 (strain SH0165) (Haemophilus parasuis).